Consider the following 181-residue polypeptide: Putative D-tyrosyl-tRNA(Tyr) deacylase 2 (181 aa).

Belongs to the DTD family. Highly divergent. As to quaternary structure, homodimer.

Its subcellular location is the cytoplasm. Functionally, may hydrolyze D-tyrosyl-tRNA(Tyr) into D-tyrosine and free tRNA(Tyr). Could be a defense mechanism against a harmful effect of D-tyrosine. This is Putative D-tyrosyl-tRNA(Tyr) deacylase 2 from Leishmania major.